A 402-amino-acid polypeptide reads, in one-letter code: Beta sliding clamp (402 aa).

The protein belongs to the beta sliding clamp family. In terms of assembly, forms a ring-shaped head-to-tail homodimer around DNA which binds and tethers DNA polymerases and other proteins to the DNA. The DNA replisome complex has a single clamp-loading complex (3 tau and 1 each of delta, delta', psi and chi subunits) which binds 3 Pol III cores (1 core on the leading strand and 2 on the lagging strand) each with a beta sliding clamp dimer. Additional proteins in the replisome are other copies of gamma, psi and chi, Ssb, DNA helicase and RNA primase.

The protein localises to the cytoplasm. In terms of biological role, confers DNA tethering and processivity to DNA polymerases and other proteins. Acts as a clamp, forming a ring around DNA (a reaction catalyzed by the clamp-loading complex) which diffuses in an ATP-independent manner freely and bidirectionally along dsDNA. Initially characterized for its ability to contact the catalytic subunit of DNA polymerase III (Pol III), a complex, multichain enzyme responsible for most of the replicative synthesis in bacteria; Pol III exhibits 3'-5' exonuclease proofreading activity. The beta chain is required for initiation of replication as well as for processivity of DNA replication. The chain is Beta sliding clamp (dnaN) from Mycobacterium bovis (strain ATCC BAA-935 / AF2122/97).